Here is a 329-residue protein sequence, read N- to C-terminus: MEAPPPSSDPYKFLNITLNSDGSLTRHRDFPKLPPTEQSKDIPLNQTNNTFIRIFKPRNIPPESKLPILVYFHGGGFILYSAASAPFHESCTKMADRLQTIILSVEYRLAPEHRLPAAYEDAVEAILWLRDQARGPINGGDCDTWLKDGVDFSKCYVMGSSSGGNIVYNVALRVVDTDLSPVKIQGLIMNQAFFGGVEPSDSESRLKDDKICPLPATHLLWSLCLPDGVDRDHVYSNPIKSSGPQEKDKMGRFPSTLINGYGGDPLVDRQRHVAEMLKGRGVHVETRFDKDGFHACELFDGNKAKALYETVEAFMKSCSSTGPSSNSNM.

Residues 73-75 (HGG) carry the Involved in the stabilization of the negatively charged intermediate by the formation of the oxyanion hole motif. Residues S161, D264, and H294 contribute to the active site.

It belongs to the 'GDXG' lipolytic enzyme family. In terms of tissue distribution, expressed in leaves, stems, flowers and siliques.

The catalysed reaction is a carboxylic ester + H2O = an alcohol + a carboxylate + H(+). In terms of biological role, carboxylesterase acting on esters with varying acyl chain length. This chain is Probable carboxylesterase 8 (CXE8), found in Arabidopsis thaliana (Mouse-ear cress).